The following is a 301-amino-acid chain: 4-hydroxy-tetrahydrodipicolinate synthase (301 aa).

Thr57 is a binding site for pyruvate. The active-site Proton donor/acceptor is the Tyr145. The Schiff-base intermediate with substrate role is filled by Lys173. Ile213 is a pyruvate binding site.

The protein belongs to the DapA family. As to quaternary structure, homotetramer; dimer of dimers.

Its subcellular location is the cytoplasm. The enzyme catalyses L-aspartate 4-semialdehyde + pyruvate = (2S,4S)-4-hydroxy-2,3,4,5-tetrahydrodipicolinate + H2O + H(+). It participates in amino-acid biosynthesis; L-lysine biosynthesis via DAP pathway; (S)-tetrahydrodipicolinate from L-aspartate: step 3/4. Catalyzes the condensation of (S)-aspartate-beta-semialdehyde [(S)-ASA] and pyruvate to 4-hydroxy-tetrahydrodipicolinate (HTPA). The sequence is that of 4-hydroxy-tetrahydrodipicolinate synthase from Corynebacterium diphtheriae (strain ATCC 700971 / NCTC 13129 / Biotype gravis).